The sequence spans 1345 residues: Rho guanine nucleotide exchange factor 10 (1345 aa).

Disordered stretches follow at residues 1 to 84 (MEQG…PAKL) and 99 to 120 (TPLQ…GVGL). The segment covering 22–39 (NNEEEGELFDFDSGDEVP) has biased composition (acidic residues). The segment covering 40–54 (EADRQVPSADDRTRG) has biased composition (basic and acidic residues). Residues 102-111 (QEDQPSSPDA) are compositionally biased toward polar residues. Phosphoserine is present on S157. Disordered regions lie at residues 158 to 195 (VEEE…SALA) and 207 to 273 (MENP…IPRS). Polar residues predominate over residues 171–191 (QCNSLSSEDLPHSSEQGSQEG). Over residues 224–239 (DSEPDEMIYDDVENGE) the composition is skewed to acidic residues. Positions 242–255 (GNSSPEYGWSSSEF) are enriched in low complexity. Residues 307–335 (GAMEIQQAKQRQERKMQKLMKAAKEGTKD) are a coiled coil. A Phosphoserine modification is found at S355. Residues 397-584 (VRRYILGSIV…ETLAEKLNER (188 aa)) form the DH domain. Disordered regions lie at residues 1202 to 1237 (DRAR…QPDT) and 1253 to 1306 (KNDL…RASS). The span at 1256–1271 (LSSSSGSLNLSHGSSS) shows a compositional bias: low complexity. Residue S1262 is modified to Phosphoserine. Position 1314 is an N5-methylglutamine (Q1314).

In terms of processing, methylated at Gln-1314 by N6AMT1. In terms of tissue distribution, ubiquitously expressed.

May play a role in developmental myelination of peripheral nerves. This is Rho guanine nucleotide exchange factor 10 (Arhgef10) from Mus musculus (Mouse).